The following is a 497-amino-acid chain: Probable malate:quinone oxidoreductase (497 aa).

Belongs to the MQO family. Requires FAD as cofactor.

The enzyme catalyses (S)-malate + a quinone = a quinol + oxaloacetate. It participates in carbohydrate metabolism; tricarboxylic acid cycle; oxaloacetate from (S)-malate (quinone route): step 1/1. This Prochlorococcus marinus subsp. pastoris (strain CCMP1986 / NIES-2087 / MED4) protein is Probable malate:quinone oxidoreductase.